We begin with the raw amino-acid sequence, 495 residues long: Probable leucine aminopeptidase 2 (495 aa).

A signal peptide spans 1–21 (MKSQLLSLAVAVTTISQGVVG). The PA domain occupies 130-216 (MAELVVAKNN…SQEDGKNLAT (87 aa)). N-linked (GlcNAc...) asparagine glycosylation is found at Asn142 and Asn235. Zn(2+) contacts are provided by His259 and Asp271. Asn272 is a glycosylation site (N-linked (GlcNAc...) asparagine). Glu303 (proton acceptor) is an active-site residue. The Zn(2+) site is built by Glu304 and Asp332. An N-linked (GlcNAc...) asparagine glycan is attached at Asn352. Residue His430 participates in Zn(2+) binding.

This sequence belongs to the peptidase M28 family. M28A subfamily. In terms of assembly, monomer. Zn(2+) is required as a cofactor.

The protein localises to the secreted. Its function is as follows. Extracellular aminopeptidase that releases a wide variety of amino acids from natural peptides and contributes to pathogenicity. The sequence is that of Probable leucine aminopeptidase 2 (LAP2) from Arthroderma benhamiae (strain ATCC MYA-4681 / CBS 112371) (Trichophyton mentagrophytes).